A 258-amino-acid polypeptide reads, in one-letter code: Imidazole glycerol phosphate synthase subunit HisF (258 aa).

Residues Asp11 and Asp130 contribute to the active site.

The protein belongs to the HisA/HisF family. In terms of assembly, heterodimer of HisH and HisF.

It is found in the cytoplasm. It carries out the reaction 5-[(5-phospho-1-deoxy-D-ribulos-1-ylimino)methylamino]-1-(5-phospho-beta-D-ribosyl)imidazole-4-carboxamide + L-glutamine = D-erythro-1-(imidazol-4-yl)glycerol 3-phosphate + 5-amino-1-(5-phospho-beta-D-ribosyl)imidazole-4-carboxamide + L-glutamate + H(+). It participates in amino-acid biosynthesis; L-histidine biosynthesis; L-histidine from 5-phospho-alpha-D-ribose 1-diphosphate: step 5/9. Its function is as follows. IGPS catalyzes the conversion of PRFAR and glutamine to IGP, AICAR and glutamate. The HisF subunit catalyzes the cyclization activity that produces IGP and AICAR from PRFAR using the ammonia provided by the HisH subunit. The sequence is that of Imidazole glycerol phosphate synthase subunit HisF from Azorhizobium caulinodans (strain ATCC 43989 / DSM 5975 / JCM 20966 / LMG 6465 / NBRC 14845 / NCIMB 13405 / ORS 571).